The primary structure comprises 247 residues: Carboxy-S-adenosyl-L-methionine synthase (247 aa).

S-adenosyl-L-methionine contacts are provided by residues Tyr39, 64–66 (GCS), 89–90 (DN), 117–118 (DI), Asn132, and Arg199.

Belongs to the class I-like SAM-binding methyltransferase superfamily. Cx-SAM synthase family. In terms of assembly, homodimer.

The enzyme catalyses prephenate + S-adenosyl-L-methionine = carboxy-S-adenosyl-L-methionine + 3-phenylpyruvate + H2O. Functionally, catalyzes the conversion of S-adenosyl-L-methionine (SAM) to carboxy-S-adenosyl-L-methionine (Cx-SAM). In Salmonella choleraesuis (strain SC-B67), this protein is Carboxy-S-adenosyl-L-methionine synthase.